A 131-amino-acid polypeptide reads, in one-letter code: MDKEECSSSESGWTTYLSSPIKVDEDEVVDEDYYYEGYNIYNYSSKVEHEEERNKDSDDSMASDASSGPNYQRFHQKNKALDLKNGKNEGNSKSKNDDDHHNHYHDGKKTSNSYRKKDKKKRENKSTYRMK.

Disordered regions lie at residues 1–21 (MDKE…SSPI) and 40–131 (IYNY…YRMK). Polar residues predominate over residues 8–18 (SSESGWTTYLS). Positions 11 to 16 (SGWTTY) match the SOFL-A motif. Basic and acidic residues predominate over residues 46–58 (KVEHEEERNKDSD). The SOFL-B signature appears at 60–69 (SMASDASSGP). Residues 79-109 (KALDLKNGKNEGNSKSKNDDDHHNHYHDGKK) show a composition bias toward basic and acidic residues. The Nuclear localization signal signature appears at 107–114 (GKKTSNSY). Basic residues predominate over residues 114 to 131 (YRKKDKKKRENKSTYRMK).

Belongs to the SOFL plant protein family. As to expression, expressed, at low levels, in seedlings, roots, flowers and siliques.

It localises to the cytoplasm. It is found in the nucleus. Its function is as follows. Involved in cytokinin-mediated development. The polypeptide is Protein SOB FIVE-LIKE 4 (Arabidopsis thaliana (Mouse-ear cress)).